Consider the following 304-residue polypeptide: Homoserine O-acetyltransferase (304 aa).

C142 acts as the Acyl-thioester intermediate in catalysis. Substrate-binding residues include K163 and S191. H234 functions as the Proton acceptor in the catalytic mechanism. E236 is a catalytic residue. Substrate is bound at residue R248.

It belongs to the MetA family.

Its subcellular location is the cytoplasm. The enzyme catalyses L-homoserine + acetyl-CoA = O-acetyl-L-homoserine + CoA. It functions in the pathway amino-acid biosynthesis; L-methionine biosynthesis via de novo pathway; O-acetyl-L-homoserine from L-homoserine: step 1/1. Transfers an acetyl group from acetyl-CoA to L-homoserine, forming acetyl-L-homoserine. This chain is Homoserine O-acetyltransferase, found in Thermotoga neapolitana (strain ATCC 49049 / DSM 4359 / NBRC 107923 / NS-E).